A 450-amino-acid chain; its full sequence is MGSSYQESPPLLLEDLKVTIKESTLIFPSEETSERKSMFLSNVDQILNFDVQTVHFFRPNKEFPPEMVSEKLRKALVKLMDAYEFLAGRLRVDPSSGRLDVDCNGAGAGFVTAASDYTLEELGDLVYPNPAFAQLVTSQLQSLPKDDQPLFVFQITSFKCGGFAMGISTNHTTFDGLSFKTFLENLASLLHEKPLSTPPCNDRTLLKARDPPSVAFPHHELVKFQDCETTTVFEATSEHLDFKIFKLSSEQIKKLKERASETSNGNVRVTGFNVVTALVWRCKALSVAAEEGEETNLERESTILYAVDIRGRLNPELPPSYTGNAVLTAYAKEKCKALLEEPFGRIVEMVGEGSKRITDEYARSAIDWGELYKGFPHGEVLVSSWWKLGFAEVEYPWGKPKYSCPVVYHRKDIVLLFPDIDGDSKGVYVLAALPSKEMSKFQHWFEDTLC.

Catalysis depends on proton acceptor residues His171 and Glu394.

It belongs to the plant acyltransferase family. Restricted to the central cells of embryo sacs.

It is found in the cytoplasm. Its subcellular location is the nucleus. Required for double fertilization of the egg cell and the central cell by two sperm cells, resulting in the formation of the embryo and the endosperm. Involved in the regulation of embryonic expression of PHE1. Essential in maternal tissues to ensure the paternal embryonic expression of several genes, including RPS5a and FAC1, both of which being essential for early embryo and endosperm development in fertilized seeds. The protein is Acyltransferase GLAUCE of Arabidopsis thaliana (Mouse-ear cress).